The primary structure comprises 329 residues: tRNA pseudouridine synthase B (329 aa).

Residue His43 participates in substrate binding. Asp48 acts as the Nucleophile in catalysis. The substrate site is built by Tyr76, Tyr179, and Leu200.

This sequence belongs to the pseudouridine synthase TruB family. Type 1 subfamily.

The enzyme catalyses uridine(55) in tRNA = pseudouridine(55) in tRNA. In terms of biological role, responsible for synthesis of pseudouridine from uracil-55 in the psi GC loop of transfer RNAs. The protein is tRNA pseudouridine synthase B of Yersinia enterocolitica serotype O:8 / biotype 1B (strain NCTC 13174 / 8081).